The following is a 330-amino-acid chain: Carbonic anhydrase (330 aa).

The tract at residues 1–109 (MSTASAFATN…AAARIDQITA (109 aa)) is chloroplast transit peptide-like.

It belongs to the beta-class carbonic anhydrase family.

The protein localises to the cytoplasm. It catalyses the reaction hydrogencarbonate + H(+) = CO2 + H2O. Its function is as follows. Reversible hydration of carbon dioxide. This is Carbonic anhydrase from Flaveria brownii (Brown's yellowtops).